The chain runs to 191 residues: Pyridoxal 5'-phosphate synthase subunit PdxT (191 aa).

46-48 (GES) serves as a coordination point for L-glutamine. C78 acts as the Nucleophile in catalysis. L-glutamine contacts are provided by residues R105 and 134–135 (IR). Active-site charge relay system residues include H170 and E172.

The protein belongs to the glutaminase PdxT/SNO family. In terms of assembly, in the presence of PdxS, forms a dodecamer of heterodimers. Only shows activity in the heterodimer.

It catalyses the reaction aldehydo-D-ribose 5-phosphate + D-glyceraldehyde 3-phosphate + L-glutamine = pyridoxal 5'-phosphate + L-glutamate + phosphate + 3 H2O + H(+). The catalysed reaction is L-glutamine + H2O = L-glutamate + NH4(+). It participates in cofactor biosynthesis; pyridoxal 5'-phosphate biosynthesis. Its function is as follows. Catalyzes the hydrolysis of glutamine to glutamate and ammonia as part of the biosynthesis of pyridoxal 5'-phosphate. The resulting ammonia molecule is channeled to the active site of PdxS. This chain is Pyridoxal 5'-phosphate synthase subunit PdxT, found in Carboxydothermus hydrogenoformans (strain ATCC BAA-161 / DSM 6008 / Z-2901).